Here is a 362-residue protein sequence, read N- to C-terminus: MAAWEAAFAARRRHEEEDTTRDSVFTYTNSNNTRGPFEGPNYHIAPRWVYNLTSVWMIFVVAASVFTNGLVLVATWKFKKLRHPLNWILVNLAVADLGETVIASTISVINQISGYFILGHPMCVVEGYTVSACGITALWSLAIISWERWFVVCKPFGNIKFDGKLAVAGILFSWLWSCAWTAPPIFGWSRYWPHGLKTSCGPDVFSGSSDPGVQSYMVVLMVTCCFFPLAIIILCYLQVWLAIRAVAAQQKESESTQKAEKEVSRMVVVMIVAYCFCWGPYTFFACFAAANPGYAFHPLAAALPAYFAKSATIYNPIIYVFMNRQFRNCILQLFGKKVDDGSEVSTSRTEVSSVSNSSVSPA.

The Extracellular portion of the chain corresponds to 1 to 49 (MAAWEAAFAARRRHEEEDTTRDSVFTYTNSNNTRGPFEGPNYHIAPRWV). Residue asparagine 31 is glycosylated (N-linked (GlcNAc...) asparagine). A helical transmembrane segment spans residues 50–74 (YNLTSVWMIFVVAASVFTNGLVLVA). Residues 75-86 (TWKFKKLRHPLN) are Cytoplasmic-facing. Residues 87 to 112 (WILVNLAVADLGETVIASTISVINQI) traverse the membrane as a helical segment. Residues 113–126 (SGYFILGHPMCVVE) are Extracellular-facing. A disulfide bond links cysteine 123 and cysteine 200. The helical transmembrane segment at 127-146 (GYTVSACGITALWSLAIISW) threads the bilayer. Over 147–165 (ERWFVVCKPFGNIKFDGKL) the chain is Cytoplasmic. The chain crosses the membrane as a helical span at residues 166-189 (AVAGILFSWLWSCAWTAPPIFGWS). The Extracellular segment spans residues 190–215 (RYWPHGLKTSCGPDVFSGSSDPGVQS). The chain crosses the membrane as a helical span at residues 216 to 243 (YMVVLMVTCCFFPLAIIILCYLQVWLAI). Residues 244–265 (RAVAAQQKESESTQKAEKEVSR) are Cytoplasmic-facing. The helical transmembrane segment at 266–289 (MVVVMIVAYCFCWGPYTFFACFAA) threads the bilayer. At 290–297 (ANPGYAFH) the chain is on the extracellular side. The helical transmembrane segment at 298–322 (PLAAALPAYFAKSATIYNPIIYVFM) threads the bilayer. Lysine 309 carries the N6-(retinylidene)lysine modification. The Cytoplasmic segment spans residues 323-362 (NRQFRNCILQLFGKKVDDGSEVSTSRTEVSSVSNSSVSPA).

This sequence belongs to the G-protein coupled receptor 1 family. Opsin subfamily. Phosphorylated on some or all of the serine and threonine residues present in the C-terminal region. In terms of tissue distribution, the color pigments are found in the cone photoreceptor cells.

It is found in the membrane. Its function is as follows. Visual pigments are the light-absorbing molecules that mediate vision. They consist of an apoprotein, opsin, covalently linked to cis-retinal. This is Red-sensitive opsin from Gallus gallus (Chicken).